Reading from the N-terminus, the 914-residue chain is Translation initiation factor IF-2 (914 aa).

Positions 58–160 are disordered; it reads KTEKKQTAKK…EAEPKIEVMP (103 aa). Over residues 70–91 the composition is skewed to basic and acidic residues; sequence KKDTVKKDTVKKTAVKKDDSKA. The segment covering 92 to 103 has biased composition (basic residues); sequence AKKTKPIAKKSA. Basic and acidic residues predominate over residues 104–160; sequence PKTEKKVEKKVESKISKPDNEILEAKPEISKPEIKAEPKKEEIEQKQEAEPKIEVMP. Residues 413-582 form the tr-type G domain; sequence ERVPVITIMG…LLQADLLELK (170 aa). Positions 422 to 429 are G1; the sequence is GHVDHGKT. 422-429 lines the GTP pocket; sequence GHVDHGKT. The G2 stretch occupies residues 447-451; sequence GITQH. The interval 468–471 is G3; that stretch reads DTPG. Residues 468-472 and 522-525 contribute to the GTP site; these read DTPGH and NKMD. The segment at 522–525 is G4; the sequence is NKMD. The G5 stretch occupies residues 558 to 560; it reads SAK.

The protein belongs to the TRAFAC class translation factor GTPase superfamily. Classic translation factor GTPase family. IF-2 subfamily.

The protein resides in the cytoplasm. Its function is as follows. One of the essential components for the initiation of protein synthesis. Protects formylmethionyl-tRNA from spontaneous hydrolysis and promotes its binding to the 30S ribosomal subunits. Also involved in the hydrolysis of GTP during the formation of the 70S ribosomal complex. The polypeptide is Translation initiation factor IF-2 (Campylobacter hominis (strain ATCC BAA-381 / DSM 21671 / CCUG 45161 / LMG 19568 / NCTC 13146 / CH001A)).